Consider the following 130-residue polypeptide: Small ribosomal subunit protein uS9 (130 aa).

It belongs to the universal ribosomal protein uS9 family.

This chain is Small ribosomal subunit protein uS9, found in Burkholderia multivorans (strain ATCC 17616 / 249).